A 206-amino-acid chain; its full sequence is ATP-dependent Clp protease proteolytic subunit 2 (206 aa).

The active-site Nucleophile is Ser100. The active site involves His125.

Belongs to the peptidase S14 family. Fourteen ClpP subunits assemble into 2 heptameric rings which stack back to back to give a disk-like structure with a central cavity, resembling the structure of eukaryotic proteasomes.

Its subcellular location is the cytoplasm. The catalysed reaction is Hydrolysis of proteins to small peptides in the presence of ATP and magnesium. alpha-casein is the usual test substrate. In the absence of ATP, only oligopeptides shorter than five residues are hydrolyzed (such as succinyl-Leu-Tyr-|-NHMec, and Leu-Tyr-Leu-|-Tyr-Trp, in which cleavage of the -Tyr-|-Leu- and -Tyr-|-Trp bonds also occurs).. In terms of biological role, cleaves peptides in various proteins in a process that requires ATP hydrolysis. Has a chymotrypsin-like activity. Plays a major role in the degradation of misfolded proteins. This Myxococcus xanthus protein is ATP-dependent Clp protease proteolytic subunit 2.